The following is a 147-amino-acid chain: Deoxyuridine 5'-triphosphate nucleotidohydrolase (147 aa).

Substrate-binding positions include 67-69, asparagine 80, and 84-86; these read RSG and TID.

The protein belongs to the dUTPase family. It depends on Mg(2+) as a cofactor.

It carries out the reaction dUTP + H2O = dUMP + diphosphate + H(+). It functions in the pathway pyrimidine metabolism; dUMP biosynthesis; dUMP from dCTP (dUTP route): step 2/2. Functionally, this enzyme is involved in nucleotide metabolism: it produces dUMP, the immediate precursor of thymidine nucleotides and it decreases the intracellular concentration of dUTP so that uracil cannot be incorporated into DNA. The protein is Deoxyuridine 5'-triphosphate nucleotidohydrolase of Anaeromyxobacter sp. (strain Fw109-5).